A 631-amino-acid chain; its full sequence is Protelomerase (631 aa).

4 residues coordinate DNA: arginine 275, lysine 300, arginine 383, and histidine 416. Tyrosine 425 serves as the catalytic Nucleophile. The interval 533–592 (LPDEESVETIDEPDDESQDDELDEDEIELDEGGGDEPTEEEGPEEHQPTALKPVFKPAKN) is disordered. A compositionally biased stretch (acidic residues) spans 534–575 (PDEESVETIDEPDDESQDDELDEDEIELDEGGGDEPTEEEGP).

Belongs to the Caudoviricetes Protelomerase family. Monomer. Homodimer; in presence of DNA.

In terms of biological role, converts the circular intermediates produced by the viral replication and carrying a joined telomere site to a linear DNA molecule with covalently closed hairpin ends. The viral circular DNA is cleaved at a palindromic site called telRL thereby generating a linear prophage plasmid with telomeres. Binds covalently to the 3'-phosphoryl of the cleaved strands. This chain is Protelomerase, found in Escherichia coli (Bacteriophage N15).